Reading from the N-terminus, the 441-residue chain is Glutamate--tRNA ligase 2 (441 aa).

A 'HIGH' region motif is present at residues 9-19 (PSPTGYIHVGN). A 'KMSKS' region motif is present at residues 239–243 (ALSKR). Lys242 serves as a coordination point for ATP.

Belongs to the class-I aminoacyl-tRNA synthetase family. Glutamate--tRNA ligase type 1 subfamily. In terms of assembly, monomer.

It localises to the cytoplasm. The catalysed reaction is tRNA(Glu) + L-glutamate + ATP = L-glutamyl-tRNA(Glu) + AMP + diphosphate. Catalyzes the attachment of glutamate to tRNA(Glu) in a two-step reaction: glutamate is first activated by ATP to form Glu-AMP and then transferred to the acceptor end of tRNA(Glu). The sequence is that of Glutamate--tRNA ligase 2 from Cereibacter sphaeroides (strain ATCC 17029 / ATH 2.4.9) (Rhodobacter sphaeroides).